The following is a 173-amino-acid chain: Crossover junction endodeoxyribonuclease RuvC (173 aa).

Residues aspartate 8, glutamate 67, and aspartate 139 contribute to the active site. Residues aspartate 8, glutamate 67, and aspartate 139 each coordinate Mg(2+).

This sequence belongs to the RuvC family. As to quaternary structure, homodimer which binds Holliday junction (HJ) DNA. The HJ becomes 2-fold symmetrical on binding to RuvC with unstacked arms; it has a different conformation from HJ DNA in complex with RuvA. In the full resolvosome a probable DNA-RuvA(4)-RuvB(12)-RuvC(2) complex forms which resolves the HJ. The cofactor is Mg(2+).

It localises to the cytoplasm. It carries out the reaction Endonucleolytic cleavage at a junction such as a reciprocal single-stranded crossover between two homologous DNA duplexes (Holliday junction).. In terms of biological role, the RuvA-RuvB-RuvC complex processes Holliday junction (HJ) DNA during genetic recombination and DNA repair. Endonuclease that resolves HJ intermediates. Cleaves cruciform DNA by making single-stranded nicks across the HJ at symmetrical positions within the homologous arms, yielding a 5'-phosphate and a 3'-hydroxyl group; requires a central core of homology in the junction. The consensus cleavage sequence is 5'-(A/T)TT(C/G)-3'. Cleavage occurs on the 3'-side of the TT dinucleotide at the point of strand exchange. HJ branch migration catalyzed by RuvA-RuvB allows RuvC to scan DNA until it finds its consensus sequence, where it cleaves and resolves the cruciform DNA. The protein is Crossover junction endodeoxyribonuclease RuvC of Klebsiella pneumoniae subsp. pneumoniae (strain ATCC 700721 / MGH 78578).